The following is a 379-amino-acid chain: Lipid-A-disaccharide synthase (379 aa).

This sequence belongs to the LpxB family.

It catalyses the reaction a lipid X + a UDP-2-N,3-O-bis[(3R)-3-hydroxyacyl]-alpha-D-glucosamine = a lipid A disaccharide + UDP + H(+). It participates in bacterial outer membrane biogenesis; LPS lipid A biosynthesis. Its function is as follows. Condensation of UDP-2,3-diacylglucosamine and 2,3-diacylglucosamine-1-phosphate to form lipid A disaccharide, a precursor of lipid A, a phosphorylated glycolipid that anchors the lipopolysaccharide to the outer membrane of the cell. This chain is Lipid-A-disaccharide synthase, found in Idiomarina loihiensis (strain ATCC BAA-735 / DSM 15497 / L2-TR).